The sequence spans 181 residues: MAQDSNNLIWIDMEMTGLNPNTDCIIEIALVVTDAQLNTVAEAPVLVISQPDSVLNGMDKWNQSTHGKSGLIDKVKASTLSEAEAEARMLAFLAPYVPADISPMCGNSICQDRRFLARCMPQLEAYFHYRNLDVSTLKELAKRWKPEVAQGFNKQGKHEALADIYDSIEELKHYRQHLFNI.

The 164-residue stretch at 8-171 (LIWIDMEMTG…ADIYDSIEEL (164 aa)) folds into the Exonuclease domain. Tyr129 is a catalytic residue.

Belongs to the oligoribonuclease family.

It localises to the cytoplasm. 3'-to-5' exoribonuclease specific for small oligoribonucleotides. This chain is Oligoribonuclease, found in Nitrosomonas eutropha (strain DSM 101675 / C91 / Nm57).